The following is a 333-amino-acid chain: D-2-hydroxyacid dehydrogenase (NAD+) (333 aa).

Residue Y100 participates in 4-methyl-2-oxopentanoate binding. The NAD(+) site is built by H155, I156, D175, V205, N211, T232, R234, and D258. R234 is an active-site residue. E263 is an active-site residue. 4-methyl-2-oxopentanoate is bound at residue H295. H295 functions as the Proton donor in the catalytic mechanism.

This sequence belongs to the D-isomer specific 2-hydroxyacid dehydrogenase family. In terms of assembly, homodimer.

It catalyses the reaction a (2R)-2-hydroxycarboxylate + NAD(+) = a 2-oxocarboxylate + NADH + H(+). The catalysed reaction is (2R)-hydroxy-4-methylpentanoate + NAD(+) = 4-methyl-2-oxopentanoate + NADH + H(+). It carries out the reaction (R)-3-phenyllactate + NAD(+) = 3-phenylpyruvate + NADH + H(+). Its activity is regulated as follows. Completely inhibited In the presence of 0.1 mM Hg(2+). No influence on the activity could be detected with Mg(2+) and Ca(2+) and only very weak effects with Cd(2+), Co(2+) and Mn(2+). Reducing agents and thiol group reagents do not affect catalytic activity. Functionally, catalyzes the NADH-dependent reversible reduction of various 2-ketocarboxylic acids to the corresponding D-2-hydroxycarboxylic acids. In vitro can use various substrates, including 4-methyl-2-oxopentanoate (2-oxoisocaproate), 2-oxopentanoate, 2-oxohexanoate and phenylpyruvate. The protein is D-2-hydroxyacid dehydrogenase (NAD+) of Lacticaseibacillus paracasei (Lactobacillus paracasei).